The sequence spans 438 residues: UPF0229 protein NGR_c12350 (438 aa).

The segment covering 1 to 16 has biased composition (basic and acidic residues); that stretch reads MPNFIDRRLNPKDKSL. Disordered regions lie at residues 1–20 and 83–107; these read MPNF…GNRQ and FAAG…GTGQ. A compositionally biased stretch (gly residues) spans 94 to 105; that stretch reads SGGGATGAGAGT.

The protein belongs to the UPF0229 family.

The polypeptide is UPF0229 protein NGR_c12350 (Sinorhizobium fredii (strain NBRC 101917 / NGR234)).